Consider the following 155-residue polypeptide: Zinc finger HIT domain-containing protein 3 (155 aa).

Zn(2+) is bound by residues C11, C14, C22, C25, C30, C34, H38, and C42. Residues 11–42 form an HIT-type zinc finger; the sequence is CVICLEKPKYRCPACRVPYCSVVCFRKHKEQC. At S80 the chain carries Phosphoserine.

As to quaternary structure, thyroid receptor interacting proteins (TRIPs) specifically interact with the ligand binding domain of the thyroid receptor (TR). Requires the presence of thyroid hormone for its interaction. Interacts with NUFIP1. Interacts (via HIT-type zinc finger) with the RUVBL1/RUVBL2 complex in the presence of ADP.

The protein resides in the cytoplasm. The protein localises to the nucleus. The chain is Zinc finger HIT domain-containing protein 3 (ZNHIT3) from Homo sapiens (Human).